The chain runs to 632 residues: MAU2 chromatid cohesion factor homolog (632 aa).

TPR repeat units follow at residues 453–486 and 493–526; these read GGFYYVQGLHAFHKNSFHEAKRFLRETLKMANAE and SCSLVLLSHVFLSIGNSKESMNMVTPAMQLASKI.

Belongs to the SCC4/mau-2 family. Interacts with Nipped-B to form the cohesin loading complex.

Its subcellular location is the nucleus. The protein resides in the nucleoplasm. Its function is as follows. Required for association of the cohesin complex with chromatin during interphase. Plays a role in sister chromatid cohesion and normal progression through prometaphase. This chain is MAU2 chromatid cohesion factor homolog, found in Drosophila sechellia (Fruit fly).